The primary structure comprises 156 residues: Small ribosomal subunit protein uS7 (156 aa).

This sequence belongs to the universal ribosomal protein uS7 family. In terms of assembly, part of the 30S ribosomal subunit. Contacts proteins S9 and S11.

Its function is as follows. One of the primary rRNA binding proteins, it binds directly to 16S rRNA where it nucleates assembly of the head domain of the 30S subunit. Is located at the subunit interface close to the decoding center, probably blocks exit of the E-site tRNA. This Mycobacteroides abscessus (strain ATCC 19977 / DSM 44196 / CCUG 20993 / CIP 104536 / JCM 13569 / NCTC 13031 / TMC 1543 / L948) (Mycobacterium abscessus) protein is Small ribosomal subunit protein uS7.